We begin with the raw amino-acid sequence, 244 residues long: ATP synthase subunit a (244 aa).

5 helical membrane passes run 17–37, 75–95, 112–132, 170–190, and 221–241; these read LTNI…AILT, FLAL…LGLP, DPAI…YYGV, LYGN…LATS, and GAIQ…HKIS.

It belongs to the ATPase A chain family. In terms of assembly, F-type ATPases have 2 components, CF(1) - the catalytic core - and CF(0) - the membrane proton channel. CF(1) has five subunits: alpha(3), beta(3), gamma(1), delta(1), epsilon(1). CF(0) has three main subunits: a(1), b(2) and c(9-12). The alpha and beta chains form an alternating ring which encloses part of the gamma chain. CF(1) is attached to CF(0) by a central stalk formed by the gamma and epsilon chains, while a peripheral stalk is formed by the delta and b chains. The F(1)F(0) complex interacts with SpoIIIJ and YqjG; YqgA is found in the same complex.

It is found in the cell membrane. In terms of biological role, key component of the proton channel; it plays a direct role in the translocation of protons across the membrane. The sequence is that of ATP synthase subunit a from Bacillus subtilis (strain 168).